The sequence spans 62 residues: Conotoxin Cal12.2e (62 aa).

A signal peptide spans 1–19; that stretch reads MKLTCVLVVLLLVLPFGDL.

This sequence belongs to the conotoxin O1 superfamily. Contains 4 disulfide bonds. As to expression, expressed by the venom duct.

It is found in the secreted. In terms of biological role, probable neurotoxin. This Californiconus californicus (California cone) protein is Conotoxin Cal12.2e.